We begin with the raw amino-acid sequence, 358 residues long: Peroxidase 12 (358 aa).

An N-terminal signal peptide occupies residues 1–31 (MTKAYSTRVLTFLILISLMAVTLNLFPTVEA). Intrachain disulfides connect Cys53–Cys134, Cys86–Cys91, Cys140–Cys335, and Cys220–Cys247. The active-site Proton acceptor is His84. Ca(2+)-binding residues include Asp85, Val88, Gly90, Glu92, and Ser94. Pro183 serves as a coordination point for substrate. N-linked (GlcNAc...) asparagine glycosylation is found at Asn188 and Asn202. Position 213 (His213) interacts with heme b. Thr214 lines the Ca(2+) pocket. An N-linked (GlcNAc...) asparagine glycan is attached at Asn251. Asp259, Ser262, and Asp267 together coordinate Ca(2+). N-linked (GlcNAc...) asparagine glycosylation occurs at Asn334.

The protein belongs to the peroxidase family. Classical plant (class III) peroxidase subfamily. Requires heme b as cofactor. Ca(2+) is required as a cofactor. As to expression, expressed in roots and leaves.

It localises to the secreted. It is found in the vacuole. It catalyses the reaction 2 a phenolic donor + H2O2 = 2 a phenolic radical donor + 2 H2O. Its function is as follows. Removal of H(2)O(2), oxidation of toxic reductants, biosynthesis and degradation of lignin, suberization, auxin catabolism, response to environmental stresses such as wounding, pathogen attack and oxidative stress. These functions might be dependent on each isozyme/isoform in each plant tissue. Exhibits a Ca(2+)-pectate binding affinity which could be interpreted in vivo as a specificity to interact with the pectic structure of the cell wall. This is Peroxidase 12 (PER12) from Arabidopsis thaliana (Mouse-ear cress).